A 360-amino-acid chain; its full sequence is uncharacterized protein (360 aa).

Over residues 22-32 the composition is skewed to acidic residues; that stretch reads EEDVEPNEEAE. A disordered region spans residues 22-55; it reads EEDVEPNEEAEGPGGVHKKRRGARKKNRRQRMEG. The segment covering 37–50 has biased composition (basic residues); sequence VHKKRRGARKKNRR.

This is an uncharacterized protein from Caenorhabditis elegans.